We begin with the raw amino-acid sequence, 231 residues long: uncharacterized protein (231 aa).

This is an uncharacterized protein from Mycobacterium tuberculosis (strain ATCC 25618 / H37Rv).